Here is an 89-residue protein sequence, read N- to C-terminus: Small ribosomal subunit protein uS15 (89 aa).

It belongs to the universal ribosomal protein uS15 family. Part of the 30S ribosomal subunit. Forms a bridge to the 50S subunit in the 70S ribosome, contacting the 23S rRNA.

Functionally, one of the primary rRNA binding proteins, it binds directly to 16S rRNA where it helps nucleate assembly of the platform of the 30S subunit by binding and bridging several RNA helices of the 16S rRNA. Forms an intersubunit bridge (bridge B4) with the 23S rRNA of the 50S subunit in the ribosome. This chain is Small ribosomal subunit protein uS15, found in Roseiflexus castenholzii (strain DSM 13941 / HLO8).